Here is a 255-residue protein sequence, read N- to C-terminus: Hydroxyacylglutathione hydrolase (255 aa).

Residues His53, His55, Asp57, His58, His111, Asp128, and His166 each contribute to the Zn(2+) site.

Belongs to the metallo-beta-lactamase superfamily. Glyoxalase II family. As to quaternary structure, monomer. The cofactor is Zn(2+).

The catalysed reaction is an S-(2-hydroxyacyl)glutathione + H2O = a 2-hydroxy carboxylate + glutathione + H(+). Its pathway is secondary metabolite metabolism; methylglyoxal degradation; (R)-lactate from methylglyoxal: step 2/2. Thiolesterase that catalyzes the hydrolysis of S-D-lactoyl-glutathione to form glutathione and D-lactic acid. The protein is Hydroxyacylglutathione hydrolase of Nitrosomonas eutropha (strain DSM 101675 / C91 / Nm57).